The primary structure comprises 367 residues: DNA polymerase IV (367 aa).

Residues 14-198 (IIHIDMDAFF…LPIAKFHGVG (185 aa)) form the UmuC domain. 2 residues coordinate Mg(2+): Asp18 and Asp116. Glu117 is a catalytic residue.

It belongs to the DNA polymerase type-Y family. In terms of assembly, monomer. Mg(2+) is required as a cofactor.

It is found in the cytoplasm. The enzyme catalyses DNA(n) + a 2'-deoxyribonucleoside 5'-triphosphate = DNA(n+1) + diphosphate. Its function is as follows. Poorly processive, error-prone DNA polymerase involved in untargeted mutagenesis. Copies undamaged DNA at stalled replication forks, which arise in vivo from mismatched or misaligned primer ends. These misaligned primers can be extended by PolIV. Exhibits no 3'-5' exonuclease (proofreading) activity. May be involved in translesional synthesis, in conjunction with the beta clamp from PolIII. This is DNA polymerase IV from Streptococcus thermophilus (strain ATCC BAA-491 / LMD-9).